The sequence spans 569 residues: Phenylalanine ammonia-lyase (569 aa).

Residue Tyr-78 is the Proton donor/acceptor of the active site. The 5-imidazolinone (Ala-Gly) cross-link spans 167-169 (ASG). Ser-168 is subject to 2,3-didehydroalanine (Ser). Residues Asn-223, Gln-311, Arg-317, Asn-347, Lys-419, Glu-448, and Asn-451 each coordinate (E)-cinnamate.

The protein belongs to the PAL/histidase family. As to quaternary structure, homotetramer. In terms of processing, contains an active site 4-methylidene-imidazol-5-one (MIO), which is formed autocatalytically by cyclization and dehydration of residues Ala-Ser-Gly.

The protein resides in the cytoplasm. The enzyme catalyses L-phenylalanine = (E)-cinnamate + NH4(+). The protein operates within phenylpropanoid metabolism; trans-cinnamate biosynthesis; trans-cinnamate from L-phenylalanine: step 1/1. In terms of biological role, catalyzes the non-oxidative deamination of L-phenylalanine to form trans-cinnamic acid, the first step in the phenylpropanoid pathway. In Nostoc punctiforme (strain ATCC 29133 / PCC 73102), this protein is Phenylalanine ammonia-lyase.